The sequence spans 208 residues: Large ribosomal subunit protein uL3 (208 aa).

Residues 123-147 are disordered; the sequence is RHGQSRGPMAHGSRYHRRPGSMGPV.

The protein belongs to the universal ribosomal protein uL3 family. As to quaternary structure, part of the 50S ribosomal subunit. Forms a cluster with proteins L14 and L19.

One of the primary rRNA binding proteins, it binds directly near the 3'-end of the 23S rRNA, where it nucleates assembly of the 50S subunit. In Streptococcus uberis (strain ATCC BAA-854 / 0140J), this protein is Large ribosomal subunit protein uL3.